A 314-amino-acid chain; its full sequence is uncharacterized protein (314 aa).

Transmembrane regions (helical) follow at residues Phe-4–Gly-23, Phe-36–Ile-53, Thr-68–Phe-90, Ala-97–Val-116, Val-131–Ser-153, Pro-174–Trp-196, Phe-200–His-222, Glu-229–Ala-251, Met-261–Val-283, and Ala-290–Val-309.

The protein belongs to the auxin efflux carrier (TC 2.A.69) family.

It localises to the cell membrane. This is an uncharacterized protein from Escherichia coli O157:H7.